The chain runs to 351 residues: Cytoplasmic dynein 2 light intermediate chain 1 (351 aa).

A disordered region spans residues 303-335 (GTLKAVQDPARDPQYAESEVDEMRVQKDQELEH). A compositionally biased stretch (basic and acidic residues) spans 323–335 (DEMRVQKDQELEH).

Belongs to the dynein light intermediate chain family. Light intermediate chain of the cytoplasmic dynein complex 2, a multisubunit complex composed at least of eleven different proteins. The cytoplasmic dynein 2 complex consists of two catalytic heavy chains (HCs) and a number of non-catalytic subunits presented by intermediate chains (ICs), light intermediate chains (LICs) and light chains (LCs). Among them, a heavy chain (DYNC2H1), two intermediate chains (DYNC2I2 and DYNC2I1), a light intermediate chain (DYNC2LI1), and a light chain (DYNLT2B) are unique to the dynein-2 complex, but a subset of light chains are also shared by dynein-1 and dynein-2 complexes. Dynein-2 complex is built around two copies of cytoplasmic dynein 2 heavy chain 1 (DYNC2H1). The C-terminal region forms the motor domain, which converts the energy from ATP hydrolysis into movement. Its N-terminal region forms the tail, an extended structure that binds the other subunits and holds the two heavy chains in a homodimer. Interacts with DYNC2H1 (via N-terminus); this interaction stabilizes the dynein-2 complex structure. Specifically expressed by ciliated cells in brain, lung, spleen, testis and kidney (at protein level). Enriched in the ependymal layer lining the lateral ventricles (at protein level).

The protein resides in the cytoplasm. It localises to the cell projection. It is found in the cilium. The protein localises to the cytoskeleton. Its subcellular location is the cilium basal body. The protein resides in the cilium axoneme. It localises to the microtubule organizing center. It is found in the centrosome. Acts as one of several non-catalytic accessory components of the cytoplasmic dynein 2 complex (dynein-2 complex), a motor protein complex that drives the movement of cargos along microtubules within cilia and flagella in concert with the intraflagellar transport (IFT) system, facilitating the assembly of these organelles. Involved in the regulation of ciliary length. This is Cytoplasmic dynein 2 light intermediate chain 1 (Dync2li1) from Mus musculus (Mouse).